Consider the following 325-residue polypeptide: MATH domain and coiled-coil domain-containing protein At3g58430 (325 aa).

The 126-residue stretch at 6–131 (HKKFCWIIKN…KGDFKIIAEV (126 aa)) folds into the MATH domain. Positions 258–306 (FKVDWLEKKLDQVKDKKEREQSGLARLHELEEYLLKLKQKCSNLDLLVE) form a coiled coil.

The polypeptide is MATH domain and coiled-coil domain-containing protein At3g58430 (Arabidopsis thaliana (Mouse-ear cress)).